The following is a 181-amino-acid chain: Small ribosomal subunit protein uS4 (181 aa).

The 73-residue stretch at 108–180 (RRLQTIVYRK…GERQRIMNQR (73 aa)) folds into the S4 RNA-binding domain.

The protein belongs to the universal ribosomal protein uS4 family. As to quaternary structure, part of the 30S ribosomal subunit. Contacts protein S5. The interaction surface between S4 and S5 is involved in control of translational fidelity.

One of the primary rRNA binding proteins, it binds directly to 16S rRNA where it nucleates assembly of the body of the 30S subunit. Functionally, with S5 and S12 plays an important role in translational accuracy. In Methanocorpusculum labreanum (strain ATCC 43576 / DSM 4855 / Z), this protein is Small ribosomal subunit protein uS4.